Consider the following 154-residue polypeptide: Pro-corazonin (154 aa).

The signal sequence occupies residues 1–19 (MLRLLLLPLFLFTLSMCMG). Pyrrolidone carboxylic acid is present on glutamine 20. Position 30 is an asparagine amide (asparagine 30). Positions 70–154 (LERCLSQLQR…SAEPNVFGKH (85 aa)) are excised as a propeptide.

The protein belongs to the corazonin family. In terms of tissue distribution, expression is restricted to 24 neurons in the larval CNS (8 in the brain and 16 in the ventral nerve cord) and 12-16 neurons in the pars lateralis of the adult brain.

It is found in the secreted. In terms of biological role, cardioactive peptide. Corazonin is probably involved in the physiological regulation of the heart beat. Clock (Clk) and cycle (cyc) proteins negatively regulate Crz transcription in a cell-specific manner. The polypeptide is Pro-corazonin (Crz) (Drosophila erecta (Fruit fly)).